The sequence spans 335 residues: ADP-L-glycero-D-manno-heptose-6-epimerase (335 aa).

Residues Phe11–Ile12, Asp32–Asp33, Lys39, Glu75–Ser79, and Asn92 each bind NADP(+). Tyr139 functions as the Proton acceptor in the catalytic mechanism. Lys143 lines the NADP(+) pocket. A substrate-binding site is contributed by Asn172. Residues Val173 and Lys181 each coordinate NADP(+). The active-site Proton acceptor is the Lys181. Residues Arg183, His190, Phe204–Tyr207, Arg217, and Tyr296 each bind substrate.

The protein belongs to the NAD(P)-dependent epimerase/dehydratase family. HldD subfamily. Homopentamer. NADP(+) serves as cofactor.

The enzyme catalyses ADP-D-glycero-beta-D-manno-heptose = ADP-L-glycero-beta-D-manno-heptose. It functions in the pathway nucleotide-sugar biosynthesis; ADP-L-glycero-beta-D-manno-heptose biosynthesis; ADP-L-glycero-beta-D-manno-heptose from D-glycero-beta-D-manno-heptose 7-phosphate: step 4/4. Catalyzes the interconversion between ADP-D-glycero-beta-D-manno-heptose and ADP-L-glycero-beta-D-manno-heptose via an epimerization at carbon 6 of the heptose. This Polaromonas naphthalenivorans (strain CJ2) protein is ADP-L-glycero-D-manno-heptose-6-epimerase.